We begin with the raw amino-acid sequence, 186 residues long: Threonylcarbamoyl-AMP synthase (186 aa).

In terms of domain architecture, YrdC-like spans 3–186; sequence ILSLSECVDR…IINGSLIRHG (184 aa).

Belongs to the SUA5 family. TsaC subfamily.

It localises to the cytoplasm. The enzyme catalyses L-threonine + hydrogencarbonate + ATP = L-threonylcarbamoyladenylate + diphosphate + H2O. In terms of biological role, required for the formation of a threonylcarbamoyl group on adenosine at position 37 (t(6)A37) in tRNAs that read codons beginning with adenine. Catalyzes the conversion of L-threonine, HCO(3)(-)/CO(2) and ATP to give threonylcarbamoyl-AMP (TC-AMP) as the acyladenylate intermediate, with the release of diphosphate. The polypeptide is Threonylcarbamoyl-AMP synthase (Buchnera aphidicola subsp. Baizongia pistaciae (strain Bp)).